Consider the following 259-residue polypeptide: Cytochrome c oxidase subunit 3 (259 aa).

Helical transmembrane passes span 13–33, 36–56, 80–100, 125–145, 160–180, 195–215, and 237–257; these read PWPL…ASWF, HGFL…IQWW, GMIL…WAFF, FSVP…VTWA, ALIL…GEYM, FFVA…FLAI, and AWYW…IYWW.

This sequence belongs to the cytochrome c oxidase subunit 3 family. In terms of assembly, component of the cytochrome c oxidase (complex IV, CIV), a multisubunit enzyme composed of a catalytic core of 3 subunits and several supernumerary subunits. The complex exists as a monomer or a dimer and forms supercomplexes (SCs) in the inner mitochondrial membrane with ubiquinol-cytochrome c oxidoreductase (cytochrome b-c1 complex, complex III, CIII).

Its subcellular location is the mitochondrion inner membrane. It catalyses the reaction 4 Fe(II)-[cytochrome c] + O2 + 8 H(+)(in) = 4 Fe(III)-[cytochrome c] + 2 H2O + 4 H(+)(out). In terms of biological role, component of the cytochrome c oxidase, the last enzyme in the mitochondrial electron transport chain which drives oxidative phosphorylation. The respiratory chain contains 3 multisubunit complexes succinate dehydrogenase (complex II, CII), ubiquinol-cytochrome c oxidoreductase (cytochrome b-c1 complex, complex III, CIII) and cytochrome c oxidase (complex IV, CIV), that cooperate to transfer electrons derived from NADH and succinate to molecular oxygen, creating an electrochemical gradient over the inner membrane that drives transmembrane transport and the ATP synthase. Cytochrome c oxidase is the component of the respiratory chain that catalyzes the reduction of oxygen to water. Electrons originating from reduced cytochrome c in the intermembrane space (IMS) are transferred via the dinuclear copper A center (CU(A)) of subunit 2 and heme A of subunit 1 to the active site in subunit 1, a binuclear center (BNC) formed by heme A3 and copper B (CU(B)). The BNC reduces molecular oxygen to 2 water molecules using 4 electrons from cytochrome c in the IMS and 4 protons from the mitochondrial matrix. The sequence is that of Cytochrome c oxidase subunit 3 (COIII) from Lumbricus terrestris (Common earthworm).